Consider the following 161-residue polypeptide: Anther-specific protein LAT52 (161 aa).

A signal peptide spans 1-17 (MAKAIVLLSALCILALA). 3 cysteine pairs are disulfide-bonded: C35–C106, C38–C147, and C59–C94. N61 is a glycosylation site (N-linked (GlcNAc...) asparagine).

The protein belongs to the Ole e I family. In terms of tissue distribution, expressed in anthers and pollen.

Its function is as follows. May play a role during germination or early tube growth. This Solanum lycopersicum (Tomato) protein is Anther-specific protein LAT52 (LAT52).